An 88-amino-acid polypeptide reads, in one-letter code: MIKNTFISFEEQKEESRGSVEFQVFSFTNKIRRLTSHLELHRKDFLSQRGLRKILGKRQRLLAYLSKKNRVRYKELINQLNIRELKTR.

Belongs to the universal ribosomal protein uS15 family. As to quaternary structure, part of the 30S ribosomal subunit.

The protein resides in the plastid. It localises to the chloroplast. This is Small ribosomal subunit protein uS15c (rps15) from Capsella bursa-pastoris (Shepherd's purse).